Reading from the N-terminus, the 490-residue chain is V-type proton ATPase subunit B (490 aa).

Residue R380 coordinates ATP.

Belongs to the ATPase alpha/beta chains family. In terms of assembly, V-ATPase is a heteromultimeric enzyme made up of two complexes: the ATP-hydrolytic V1 complex and the proton translocation V0 complex. The V1 complex consists of three catalytic AB heterodimers that form a heterohexamer, three peripheral stalks each consisting of EG heterodimers, one central rotor including subunits D and F, and the regulatory subunits C and H. The proton translocation complex V0 consists of the proton transport subunit a, a ring of proteolipid subunits c9c'', rotary subunit d, subunits e and f, and the accessory subunits VhaAC45 and ATP6AP2. As to expression, expressed in Malpighian tubules, rectum, antennal palps and oviduct.

Functionally, non-catalytic subunit of the V1 complex of vacuolar(H+)-ATPase (V-ATPase), a multisubunit enzyme composed of a peripheral complex (V1) that hydrolyzes ATP and a membrane integral complex (V0) that translocates protons. V-ATPase is responsible for acidifying and maintaining the pH of intracellular compartments and in some cell types, is targeted to the plasma membrane, where it is responsible for acidifying the extracellular environment. Essential for the proper assembly and activity of V-ATPase. The protein is V-type proton ATPase subunit B (Vha55) of Drosophila melanogaster (Fruit fly).